A 542-amino-acid chain; its full sequence is CTP synthase (542 aa).

The interval 1–265 is amidoligase domain; sequence MARYVFITGG…DSEVLAAFGI (265 aa). CTP is bound at residue serine 13. A UTP-binding site is contributed by serine 13. Residue 14-19 participates in ATP binding; it reads SLGKGI. Residue tyrosine 54 participates in L-glutamine binding. Aspartate 71 provides a ligand contact to ATP. The Mg(2+) site is built by aspartate 71 and glutamate 139. CTP is bound by residues 146 to 148, 186 to 191, and lysine 222; these read DIE and KTKPTQ. UTP contacts are provided by residues 186 to 191 and lysine 222; that span reads KTKPTQ. Positions 291–541 constitute a Glutamine amidotransferase type-1 domain; that stretch reads TIAIVGKYTG…IAAAVEQSRL (251 aa). An L-glutamine-binding site is contributed by glycine 353. The active-site Nucleophile; for glutamine hydrolysis is the cysteine 380. L-glutamine contacts are provided by residues 381-384, glutamate 404, and arginine 469; that span reads FGMQ. Catalysis depends on residues histidine 514 and glutamate 516.

This sequence belongs to the CTP synthase family. In terms of assembly, homotetramer.

The catalysed reaction is UTP + L-glutamine + ATP + H2O = CTP + L-glutamate + ADP + phosphate + 2 H(+). The enzyme catalyses L-glutamine + H2O = L-glutamate + NH4(+). It catalyses the reaction UTP + NH4(+) + ATP = CTP + ADP + phosphate + 2 H(+). It participates in pyrimidine metabolism; CTP biosynthesis via de novo pathway; CTP from UDP: step 2/2. With respect to regulation, allosterically activated by GTP, when glutamine is the substrate; GTP has no effect on the reaction when ammonia is the substrate. The allosteric effector GTP functions by stabilizing the protein conformation that binds the tetrahedral intermediate(s) formed during glutamine hydrolysis. Inhibited by the product CTP, via allosteric rather than competitive inhibition. In terms of biological role, catalyzes the ATP-dependent amination of UTP to CTP with either L-glutamine or ammonia as the source of nitrogen. Regulates intracellular CTP levels through interactions with the four ribonucleotide triphosphates. In Chelativorans sp. (strain BNC1), this protein is CTP synthase.